Reading from the N-terminus, the 426-residue chain is Tol-Pal system protein TolB (426 aa).

Residues 1 to 24 form the signal peptide; sequence MKLKSRFTSIIGVITLFFSQTVTA.

This sequence belongs to the TolB family. In terms of assembly, the Tol-Pal system is composed of five core proteins: the inner membrane proteins TolA, TolQ and TolR, the periplasmic protein TolB and the outer membrane protein Pal. They form a network linking the inner and outer membranes and the peptidoglycan layer.

It localises to the periplasm. Its function is as follows. Part of the Tol-Pal system, which plays a role in outer membrane invagination during cell division and is important for maintaining outer membrane integrity. The chain is Tol-Pal system protein TolB from Actinobacillus pleuropneumoniae serotype 3 (strain JL03).